Reading from the N-terminus, the 1560-residue chain is uncharacterized protein (1560 aa).

Positions 1-46 (MEEIENAHYQNLENFNDETSEDVNDTSDDINKNNDDNNKYDDNNVN) are disordered. A compositionally biased stretch (acidic residues) spans 15–28 (FNDETSEDVNDTSD). Residues 29-46 (DINKNNDDNNKYDDNNVN) are compositionally biased toward basic and acidic residues. Coiled-coil stretches lie at residues 36 to 60 (DNNKYDDNNVNVLDDKNKLENEEDN) and 317 to 359 (KKNN…NNNN). Residues 568–594 (KKKKKKNDHHERDSDNNNNDSNNNNYY) form a disordered region. Residues 583–594 (NNNNDSNNNNYY) show a composition bias toward low complexity. Residues 1188–1239 (DTTNNILNKQNESLDNLKKNMYLSKNNYDNQLSSYKNTKQNKTNINEKYNNN) adopt a coiled-coil conformation. 2 helical membrane-spanning segments follow: residues 1271 to 1291 (LYISSMLYINIYLCQIFFILL) and 1314 to 1334 (LDYFYLLILLNFYSLFYILIS).

Its subcellular location is the membrane. This is an uncharacterized protein from Plasmodium falciparum (isolate 3D7).